A 462-amino-acid chain; its full sequence is Protein MOS2 (462 aa).

Low complexity predominate over residues 1-10; sequence MKLSFSLPSK. The disordered stretch occupies residues 1–32; it reads MKLSFSLPSKSKPKVTATTADGNNAVDDGTSK. Residues 156-202 form the G-patch domain; the sequence is VDGFGAALMAGYGWKPGKGIGKNAKEDVEIKEYKKWTAKEGLGFDPD. One can recognise a KOW 1 domain in the interval 231 to 258; it reads VFFVGKEVRIIAGRDVGLKGKIVEKPGS. Residues 301–336 show a composition bias toward basic and acidic residues; the sequence is DREKDKKTSGRGRGAERGSRSEVRASEKQDRGQTRE. The disordered stretch occupies residues 301-340; it reads DREKDKKTSGRGRGAERGSRSEVRASEKQDRGQTRERKVK. The KOW 2 domain occupies 401–428; it reads LPRRGGPVLVLSGKHKGVYGNLVEKDLD.

This sequence belongs to the MOS2 family.

The protein resides in the nucleus. Functionally, required for innate and induced resistance to pathogens such as compatible and incompatible isolates of P.syringae and P.parasitica. The polypeptide is Protein MOS2 (MOS2) (Arabidopsis thaliana (Mouse-ear cress)).